A 470-amino-acid chain; its full sequence is Nuclear segregation protein BFR1 (470 aa).

2 coiled-coil regions span residues 17–178 (DKKL…NGLN) and 237–281 (NEFK…THAK). Phosphoserine is present on serine 260. Threonine 336 is modified (phosphothreonine). The disordered stretch occupies residues 346-368 (APSKSKKYKKKNQQKNTENEQPA). Residues 349 to 358 (KSKKYKKKNQ) show a composition bias toward basic residues. Serine 369 is modified (phosphoserine). Positions 398-469 (NSDDVKITVE…EQEESEKDKE (72 aa)) form a coiled coil. The segment at 447 to 470 (QQVKKELEEKRLKEQEESEKDKEN) is disordered.

Functionally, implicated in secretion, nuclear segregation and in maintenance of cell size. The polypeptide is Nuclear segregation protein BFR1 (BFR1) (Saccharomyces cerevisiae (strain ATCC 204508 / S288c) (Baker's yeast)).